Here is a 91-residue protein sequence, read N- to C-terminus: MTRMVQCTKLGKEAEGLDFPPLPGELGKRIYESISKEAWQQWLKQQTMLINENRLNMADPRARQYLMKQTEKFFFGEGADQASGYVPPAQG.

It belongs to the Fe(2+)-trafficking protein family.

Its function is as follows. Could be a mediator in iron transactions between iron acquisition and iron-requiring processes, such as synthesis and/or repair of Fe-S clusters in biosynthetic enzymes. The sequence is that of Probable Fe(2+)-trafficking protein from Paraburkholderia phymatum (strain DSM 17167 / CIP 108236 / LMG 21445 / STM815) (Burkholderia phymatum).